The chain runs to 465 residues: UDP-N-acetylmuramoylalanine--D-glutamate ligase (465 aa).

Residue 116-122 (GTNGKTT) participates in ATP binding.

It belongs to the MurCDEF family.

The protein resides in the cytoplasm. The enzyme catalyses UDP-N-acetyl-alpha-D-muramoyl-L-alanine + D-glutamate + ATP = UDP-N-acetyl-alpha-D-muramoyl-L-alanyl-D-glutamate + ADP + phosphate + H(+). It participates in cell wall biogenesis; peptidoglycan biosynthesis. In terms of biological role, cell wall formation. Catalyzes the addition of glutamate to the nucleotide precursor UDP-N-acetylmuramoyl-L-alanine (UMA). This chain is UDP-N-acetylmuramoylalanine--D-glutamate ligase, found in Thermobifida fusca (strain YX).